The primary structure comprises 432 residues: Lipoyl synthase, mitochondrial (432 aa).

Low complexity predominate over residues 32–68 (TLGATPGSTSTSTSTSTATTTTLESTSTSTSGDATET). Residues 32–71 (TLGATPGSTSTSTSTSTATTTTLESTSTSTSGDATETTIK) are disordered. [4Fe-4S] cluster is bound by residues C150, C155, C161, C180, C184, C187, and S395. A Radical SAM core domain is found at 165-384 (KKSEATATIM…RDVALEMGFL (220 aa)).

Belongs to the radical SAM superfamily. Lipoyl synthase family. [4Fe-4S] cluster serves as cofactor.

The protein resides in the mitochondrion. It carries out the reaction [[Fe-S] cluster scaffold protein carrying a second [4Fe-4S](2+) cluster] + N(6)-octanoyl-L-lysyl-[protein] + 2 oxidized [2Fe-2S]-[ferredoxin] + 2 S-adenosyl-L-methionine + 4 H(+) = [[Fe-S] cluster scaffold protein] + N(6)-[(R)-dihydrolipoyl]-L-lysyl-[protein] + 4 Fe(3+) + 2 hydrogen sulfide + 2 5'-deoxyadenosine + 2 L-methionine + 2 reduced [2Fe-2S]-[ferredoxin]. It participates in protein modification; protein lipoylation via endogenous pathway; protein N(6)-(lipoyl)lysine from octanoyl-[acyl-carrier-protein]: step 2/2. Its function is as follows. Catalyzes the radical-mediated insertion of two sulfur atoms into the C-6 and C-8 positions of the octanoyl moiety bound to the lipoyl domains of lipoate-dependent enzymes, thereby converting the octanoylated domains into lipoylated derivatives. The polypeptide is Lipoyl synthase, mitochondrial (Lodderomyces elongisporus (strain ATCC 11503 / CBS 2605 / JCM 1781 / NBRC 1676 / NRRL YB-4239) (Yeast)).